A 2465-amino-acid chain; its full sequence is Serine/threonine-protein kinase TOR (2465 aa).

11 HEAT repeats span residues 184-221, 271-308, 348-389, 549-587, 588-625, 717-755, 761-799, 888-926, 981-1018, 1022-1059, and 1061-1098; these read VHVP…VIEK, SRYR…FLRD, AELV…AMGP, RLVE…FDDF, LAQA…KNPA, QYLP…STGY, NEYP…LDPH, PYLP…IVRQ, MYIL…VFGG, EHMH…TVQV, and THVS…ALGE. A disordered region spans residues 1158-1191; that stretch reads DFGGVPSEEADETQRQPRSHQVNDVRLRSAGEAS. An FAT domain is found at 1297–1877; the sequence is LLGALAEKCR…MYPLLVACKS (581 aa). The PI3K/PI4K catalytic domain occupies 2051 to 2369; sequence FVPQLIVITS…PPRGAREREL (319 aa). Residues 2057–2063 form a G-loop region; the sequence is VITSKQR. Residues 2230–2238 are catalytic loop; it reads GLGDRHPSN. Residues 2250–2275 are activation loop; that stretch reads HIDFGDCFEASMNREKFPEKVPFRLT. The tract at residues 2401–2431 is disordered; sequence RDFSSGSSLSGAGSSTQHGNEHLASGDTREV. The segment covering 2404 to 2415 has biased composition (low complexity); that stretch reads SSGSSLSGAGSS. An FATC domain is found at 2433–2465; sequence PGLSVKVQVQRLILQATSHENLCQNYVGWCPFW.

Belongs to the PI3/PI4-kinase family. As to quaternary structure, the target of rapamycin complex 1 (TORC1) is composed of at least RAPTOR, LST8 and TOR.

It carries out the reaction L-seryl-[protein] + ATP = O-phospho-L-seryl-[protein] + ADP + H(+). The enzyme catalyses L-threonyl-[protein] + ATP = O-phospho-L-threonyl-[protein] + ADP + H(+). Its activity is regulated as follows. Insensitive to inhibition by rapamycin. Component of TORC1 complex, which is an essential cell growth regulator that controls plant development. Acts through the phosphorylation of downstream effectors that are recruited by the binding partner RAPTOR. Acts by activating transcription, protein synthesis and ribosome biogenesis, and inhibiting mRNA degradation and autophagy. The polypeptide is Serine/threonine-protein kinase TOR (Oryza sativa subsp. japonica (Rice)).